Reading from the N-terminus, the 142-residue chain is Small ribosomal subunit protein bS6 (142 aa).

The segment at 103–142 (KAAESREQRAPRGEDRPARVVADDVDDSDDDTDDEDSNDE) is disordered. A compositionally biased stretch (basic and acidic residues) spans 105–124 (AESREQRAPRGEDRPARVVA). Residues 125–142 (DDVDDSDDDTDDEDSNDE) show a composition bias toward acidic residues.

Belongs to the bacterial ribosomal protein bS6 family.

In terms of biological role, binds together with bS18 to 16S ribosomal RNA. This Hahella chejuensis (strain KCTC 2396) protein is Small ribosomal subunit protein bS6.